We begin with the raw amino-acid sequence, 600 residues long: Elongation factor 4 (600 aa).

Residues 5 to 187 (KYIRNFSIIA…AIVNKLPPPK (183 aa)) form the tr-type G domain. GTP is bound by residues 17–22 (DHGKST) and 134–137 (NKID).

It belongs to the TRAFAC class translation factor GTPase superfamily. Classic translation factor GTPase family. LepA subfamily.

Its subcellular location is the cell inner membrane. The enzyme catalyses GTP + H2O = GDP + phosphate + H(+). In terms of biological role, required for accurate and efficient protein synthesis under certain stress conditions. May act as a fidelity factor of the translation reaction, by catalyzing a one-codon backward translocation of tRNAs on improperly translocated ribosomes. Back-translocation proceeds from a post-translocation (POST) complex to a pre-translocation (PRE) complex, thus giving elongation factor G a second chance to translocate the tRNAs correctly. Binds to ribosomes in a GTP-dependent manner. The polypeptide is Elongation factor 4 (Rickettsia bellii (strain OSU 85-389)).